The chain runs to 274 residues: Probable S-adenosylmethionine-dependent methyltransferase MT3114 (274 aa).

Residues 1–24 (MCAFVPHVPRHSRGDNPPSASTAS) are disordered.

The protein belongs to the methyltransferase superfamily.

Its function is as follows. Probable S-adenosylmethionine-dependent methyltransferase required for the 6-O-methylation of the polysaccharide backbone of 6-O-methylglucosyl lipopolysaccharides (MGLP). This is Probable S-adenosylmethionine-dependent methyltransferase MT3114 from Mycobacterium tuberculosis (strain CDC 1551 / Oshkosh).